The primary structure comprises 130 residues: Small ribosomal subunit protein uS11 (130 aa).

This sequence belongs to the universal ribosomal protein uS11 family. In terms of assembly, part of the 30S ribosomal subunit.

Functionally, located on the platform of the 30S subunit. The protein is Small ribosomal subunit protein uS11 of Thermoplasma acidophilum (strain ATCC 25905 / DSM 1728 / JCM 9062 / NBRC 15155 / AMRC-C165).